The following is a 461-amino-acid chain: Phosphoglucosamine mutase (461 aa).

The Phosphoserine intermediate role is filled by Ser-107. Mg(2+) is bound by residues Ser-107, Asp-254, Asp-256, and Asp-258. A Phosphoserine modification is found at Ser-107.

The protein belongs to the phosphohexose mutase family. Requires Mg(2+) as cofactor. In terms of processing, activated by phosphorylation.

It catalyses the reaction alpha-D-glucosamine 1-phosphate = D-glucosamine 6-phosphate. Its function is as follows. Catalyzes the conversion of glucosamine-6-phosphate to glucosamine-1-phosphate. The protein is Phosphoglucosamine mutase of Bifidobacterium longum (strain DJO10A).